Reading from the N-terminus, the 602-residue chain is Elongation factor 4 (602 aa).

The tr-type G domain occupies 7–188 (ENIRNFSIIA…SIIRLVPPPK (182 aa)). Residues 19–24 (DHGKST) and 135–138 (NKID) contribute to the GTP site.

This sequence belongs to the TRAFAC class translation factor GTPase superfamily. Classic translation factor GTPase family. LepA subfamily.

The protein resides in the cell inner membrane. It catalyses the reaction GTP + H2O = GDP + phosphate + H(+). Required for accurate and efficient protein synthesis under certain stress conditions. May act as a fidelity factor of the translation reaction, by catalyzing a one-codon backward translocation of tRNAs on improperly translocated ribosomes. Back-translocation proceeds from a post-translocation (POST) complex to a pre-translocation (PRE) complex, thus giving elongation factor G a second chance to translocate the tRNAs correctly. Binds to ribosomes in a GTP-dependent manner. This is Elongation factor 4 from Chlamydia trachomatis serovar L2 (strain ATCC VR-902B / DSM 19102 / 434/Bu).